The primary structure comprises 168 residues: MSLNRSEKEAVINEVTSLAAKAQTLVIAEYRGITVADMTKLRVDARSKGVSLSVLKNTLARRAVAGSQFDVVADQMTGPLIYGFSEDAVAAAKVVADFAKTNDKLVIRGGAFAGKALDVNGVKQLANIPSKEVLLAQLCGLLMSPISRTAVVLGALAAKKGEGEAAAA.

This sequence belongs to the universal ribosomal protein uL10 family. In terms of assembly, part of the ribosomal stalk of the 50S ribosomal subunit. The N-terminus interacts with L11 and the large rRNA to form the base of the stalk. The C-terminus forms an elongated spine to which L12 dimers bind in a sequential fashion forming a multimeric L10(L12)X complex.

Functionally, forms part of the ribosomal stalk, playing a central role in the interaction of the ribosome with GTP-bound translation factors. The polypeptide is Large ribosomal subunit protein uL10 (Paracidovorax citrulli (strain AAC00-1) (Acidovorax citrulli)).